The sequence spans 417 residues: Serine hydroxymethyltransferase (417 aa).

(6S)-5,6,7,8-tetrahydrofolate contacts are provided by residues Leu121 and 125-127; that span reads GHL. Residue Lys229 is modified to N6-(pyridoxal phosphate)lysine. 355–357 is a binding site for (6S)-5,6,7,8-tetrahydrofolate; sequence SPF.

The protein belongs to the SHMT family. Homodimer. The cofactor is pyridoxal 5'-phosphate.

The protein localises to the cytoplasm. It carries out the reaction (6R)-5,10-methylene-5,6,7,8-tetrahydrofolate + glycine + H2O = (6S)-5,6,7,8-tetrahydrofolate + L-serine. It functions in the pathway one-carbon metabolism; tetrahydrofolate interconversion. The protein operates within amino-acid biosynthesis; glycine biosynthesis; glycine from L-serine: step 1/1. Functionally, catalyzes the reversible interconversion of serine and glycine with tetrahydrofolate (THF) serving as the one-carbon carrier. This reaction serves as the major source of one-carbon groups required for the biosynthesis of purines, thymidylate, methionine, and other important biomolecules. Also exhibits THF-independent aldolase activity toward beta-hydroxyamino acids, producing glycine and aldehydes, via a retro-aldol mechanism. This is Serine hydroxymethyltransferase from Shewanella baltica (strain OS195).